The sequence spans 1463 residues: Probable ATP-dependent RNA helicase spindle-E (1463 aa).

Residues 131–296 (LKAIRENPVV…FKIPGPNSLF (166 aa)) form the Helicase ATP-binding domain. 144 to 151 (GMTGCGKT) serves as a coordination point for ATP. Residues 243 to 246 (DEVH) carry the DEAH box motif. Positions 348–531 (VCDRFIDEFE…NVVLKTKLLD (184 aa)) constitute a Helicase C-terminal domain. The Tudor domain occupies 951–1016 (AFKQRDIVAA…QLRGTPLDMF (66 aa)).

Belongs to the DEAD box helicase family. DEAH subfamily.

Its subcellular location is the cytoplasm. It catalyses the reaction ATP + H2O = ADP + phosphate + H(+). Probable ATP-binding RNA helicase which plays a central role during gametogenesis by repressing transposable elements and preventing their mobilization, which is essential for the germline integrity. Acts via the piRNA metabolic process, which mediates the repression of transposable elements during meiosis by forming complexes composed of piRNAs and Piwi proteins and govern the methylation and subsequent repression of transposons. The polypeptide is Probable ATP-dependent RNA helicase spindle-E (spn-E) (Anopheles gambiae (African malaria mosquito)).